The following is a 65-amino-acid chain: Large ribosomal subunit protein bL35 (65 aa).

The span at 1-15 (MPKMKTKKSASKRFQ) shows a compositional bias: basic residues. The interval 1–27 (MPKMKTKKSASKRFQVRGSGSIKRGQA) is disordered.

The protein belongs to the bacterial ribosomal protein bL35 family.

This Bordetella petrii (strain ATCC BAA-461 / DSM 12804 / CCUG 43448) protein is Large ribosomal subunit protein bL35.